We begin with the raw amino-acid sequence, 319 residues long: Acetyl-coenzyme A carboxylase carboxyl transferase subunit alpha (319 aa).

The CoA carboxyltransferase C-terminal domain occupies 32-293 (NVDTEVRALE…KAVLLNELEA (262 aa)).

It belongs to the AccA family. As to quaternary structure, acetyl-CoA carboxylase is a heterohexamer composed of biotin carboxyl carrier protein (AccB), biotin carboxylase (AccC) and two subunits each of ACCase subunit alpha (AccA) and ACCase subunit beta (AccD).

It is found in the cytoplasm. The catalysed reaction is N(6)-carboxybiotinyl-L-lysyl-[protein] + acetyl-CoA = N(6)-biotinyl-L-lysyl-[protein] + malonyl-CoA. It participates in lipid metabolism; malonyl-CoA biosynthesis; malonyl-CoA from acetyl-CoA: step 1/1. Component of the acetyl coenzyme A carboxylase (ACC) complex. First, biotin carboxylase catalyzes the carboxylation of biotin on its carrier protein (BCCP) and then the CO(2) group is transferred by the carboxyltransferase to acetyl-CoA to form malonyl-CoA. The chain is Acetyl-coenzyme A carboxylase carboxyl transferase subunit alpha from Xylella fastidiosa (strain M12).